Reading from the N-terminus, the 959-residue chain is Isoleucine--tRNA ligase (959 aa).

Residues 60-70 (PYANGSLHMGH) carry the 'HIGH' region motif. Glu-569 lines the L-isoleucyl-5'-AMP pocket. Residues 610–614 (KMSKS) carry the 'KMSKS' region motif. Lys-613 serves as a coordination point for ATP. Positions 928, 931, 948, and 951 each coordinate Zn(2+).

It belongs to the class-I aminoacyl-tRNA synthetase family. IleS type 1 subfamily. In terms of assembly, monomer. Zn(2+) serves as cofactor.

The protein resides in the cytoplasm. It carries out the reaction tRNA(Ile) + L-isoleucine + ATP = L-isoleucyl-tRNA(Ile) + AMP + diphosphate. Catalyzes the attachment of isoleucine to tRNA(Ile). As IleRS can inadvertently accommodate and process structurally similar amino acids such as valine, to avoid such errors it has two additional distinct tRNA(Ile)-dependent editing activities. One activity is designated as 'pretransfer' editing and involves the hydrolysis of activated Val-AMP. The other activity is designated 'posttransfer' editing and involves deacylation of mischarged Val-tRNA(Ile). This chain is Isoleucine--tRNA ligase, found in Gloeothece citriformis (strain PCC 7424) (Cyanothece sp. (strain PCC 7424)).